Reading from the N-terminus, the 471-residue chain is MVDVSETTERCVVHKRQGQDGGDAAWRGVQKKLRDFYGSAIYDSWLSALVYSGNENGRVVLLVPTRFIKEWILVHYLERILKYWQDESDAVYSVDICVSDGVGVQPQMAEHPDGAVDGPPVVMVGGTYDHLSSPLDPRFTFDNFVVGKPNELAFAAARRVAESSAPIPGSNPLFLYGGVGLGKTHLMHAIAWYILNSSVKRKIAYLSAEKFMYQYVTALRSKDIMLFKEQFRSVDILMVDDVQFISGKDSTQEEFFHTFNALIDQNKQLVISADRSPSDLDGVEDRIKSRLGWGLVADINETTFELRLGILQLKIEKMGVHVPNEVLEFLAKNIKSNIRELEGALNKVVAHSSLVGRSVTIESASGILSDLLRANHRMVTVGMIQKKVAEFFGIKLEDMYSARRLRALARPRQVAMYLAKRLTQKSLPDIGKSFGGRDHATVIHAVKQIEKFMEDDAKLADDINLLIRMLR.

Residues 1–91 form a domain I, interacts with DnaA modulators region; sequence MVDVSETTER…KYWQDESDAV (91 aa). The domain II stretch occupies residues 91–133; sequence VYSVDICVSDGVGVQPQMAEHPDGAVDGPPVVMVGGTYDHLSS. The tract at residues 134 to 352 is domain III, AAA+ region; the sequence is PLDPRFTFDN…GALNKVVAHS (219 aa). Residues Gly-180, Gly-182, Lys-183, and Thr-184 each contribute to the ATP site. The tract at residues 353–471 is domain IV, binds dsDNA; the sequence is SLVGRSVTIE…DINLLIRMLR (119 aa).

Belongs to the DnaA family. As to quaternary structure, oligomerizes as a right-handed, spiral filament on DNA at oriC.

It is found in the cytoplasm. Functionally, plays an essential role in the initiation and regulation of chromosomal replication. ATP-DnaA binds to the origin of replication (oriC) to initiate formation of the DNA replication initiation complex once per cell cycle. Binds the DnaA box (a 9 base pair repeat at the origin) and separates the double-stranded (ds)DNA. Forms a right-handed helical filament on oriC DNA; dsDNA binds to the exterior of the filament while single-stranded (ss)DNA is stabiized in the filament's interior. The ATP-DnaA-oriC complex binds and stabilizes one strand of the AT-rich DNA unwinding element (DUE), permitting loading of DNA polymerase. After initiation quickly degrades to an ADP-DnaA complex that is not apt for DNA replication. Binds acidic phospholipids. This chain is Chromosomal replication initiator protein DnaA, found in Anaplasma marginale (strain St. Maries).